A 235-amino-acid polypeptide reads, in one-letter code: Meiotically up-regulated gene 123 protein (235 aa).

Residues 1–14 show a composition bias toward basic and acidic residues; that stretch reads MERLATRSSHDDPY. Disordered regions lie at residues 1–34, 58–83, and 169–235; these read MERL…SNGS, PLHS…GGMR, and SRAD…FDSD. Residues 15-34 are compositionally biased toward polar residues; that stretch reads SRSSLPTSNAINSNHESNGS. Over residues 61–77 the composition is skewed to low complexity; it reads SSPSIKSSSQNGKSSSK. A compositionally biased stretch (polar residues) spans 176–202; that stretch reads ETTQSDGFESRSGSPTHDIQSYLVNRR. Phosphoserine occurs at positions 180, 187, and 189. At Thr191 the chain carries Phosphothreonine.

It is found in the cytoplasm. The protein resides in the nucleus. Involved in sporulation and has a role in meiosis. The sequence is that of Meiotically up-regulated gene 123 protein (mug123) from Schizosaccharomyces pombe (strain 972 / ATCC 24843) (Fission yeast).